The following is an 85-amino-acid chain: Small ribosomal subunit protein bS20 (85 aa).

The protein belongs to the bacterial ribosomal protein bS20 family.

Its function is as follows. Binds directly to 16S ribosomal RNA. The polypeptide is Small ribosomal subunit protein bS20 (Cytophaga hutchinsonii (strain ATCC 33406 / DSM 1761 / CIP 103989 / NBRC 15051 / NCIMB 9469 / D465)).